The sequence spans 227 residues: Uridylate kinase (227 aa).

6-10 (KVSGK) lines the ATP pocket. Gly-43 serves as a coordination point for UMP. Positions 44 and 48 each coordinate ATP. Residues Asp-65 and 113-119 (FQPGQST) each bind UMP. Residues Thr-139, Asn-140, Tyr-145, and Asp-148 each coordinate ATP.

This sequence belongs to the UMP kinase family. As to quaternary structure, homohexamer.

It is found in the cytoplasm. The catalysed reaction is UMP + ATP = UDP + ADP. Its pathway is pyrimidine metabolism; CTP biosynthesis via de novo pathway; UDP from UMP (UMPK route): step 1/1. Its activity is regulated as follows. Inhibited by UTP. Its function is as follows. Catalyzes the reversible phosphorylation of UMP to UDP. The protein is Uridylate kinase of Sulfolobus acidocaldarius (strain ATCC 33909 / DSM 639 / JCM 8929 / NBRC 15157 / NCIMB 11770).